The chain runs to 454 residues: Glutamyl-tRNA reductase (454 aa).

Residues 49 to 52 (TCNR), S109, 114 to 116 (ETQ), and Q120 each bind substrate. Residue C50 is the Nucleophile of the active site. 189–194 (GAGKMS) is an NADP(+) binding site. The disordered stretch occupies residues 434 to 454 (NDKNKQTSSSREQVLVSRFPD).

The protein belongs to the glutamyl-tRNA reductase family. In terms of assembly, homodimer.

It catalyses the reaction (S)-4-amino-5-oxopentanoate + tRNA(Glu) + NADP(+) = L-glutamyl-tRNA(Glu) + NADPH + H(+). The protein operates within porphyrin-containing compound metabolism; protoporphyrin-IX biosynthesis; 5-aminolevulinate from L-glutamyl-tRNA(Glu): step 1/2. Catalyzes the NADPH-dependent reduction of glutamyl-tRNA(Glu) to glutamate 1-semialdehyde (GSA). This chain is Glutamyl-tRNA reductase, found in Brevibacillus brevis (strain 47 / JCM 6285 / NBRC 100599).